A 563-amino-acid chain; its full sequence is Probable CoA ligase CCL11 (563 aa).

ATP contacts are provided by residues 195 to 203 (TSGTTSSPK), 328 to 333 (HGYGMT), aspartate 426, 438 to 441 (IKDR), and lysine 534. The interval 263–328 (DGEIIFNLIR…TESLGFVISH (66 aa)) is SBD1. The segment at 329–405 (GYGMTEMLGV…LKGSSIMLGY (77 aa)) is SBD2.

The protein belongs to the ATP-dependent AMP-binding enzyme family.

The protein localises to the cytoplasm. The protein resides in the cytosol. The polypeptide is Probable CoA ligase CCL11 (Humulus lupulus (European hop)).